The sequence spans 478 residues: MSVPLLKIGAVLSTMAMVTNWMSQTLPSLVGLNSTVSRAGSSEKITLFQSPEEGWQLYTSAQAPDGKCICTAVIPAQSTCARDGRSRELRQLMEKVQNVSQSMEVLELRTYRDLQYVRSMETLMRSLDARLRTADGSVSAKSFQELKDRMTELLPLSSVLEQYKADTRTIVRLREEVRNLSGNLAAIQEEMGAYGYEDLQQRVMALEARLHACAQKLGCGKLTGVSNPITIRAMGSRFGSWMTDTMAPSADSRVWYMDGYYKGRRVLEFRTLGDFIKGQNFIQHLLPQPWAGTGHVVYNGSLFYNKYQSNVVVKYHFRSRSVLVQRSLPGAGYNNTFPYSWGGFSDMDFMVDESGLWAVYTTNQNAGNIVVSRLDPHTLEVVRSWDTGYPKRSAGEAFMICGVLYVTNSHLAGAKVYFAYFTNTSSYEYTDVPFHNQYSHISMLDYNPRERALYTWNNGHQVLYNVTLFHVISTAGDP.

The N-terminal stretch at 1–16 (MSVPLLKIGAVLSTMA) is a signal peptide. N-linked (GlcNAc...) asparagine glycans are attached at residues N33, N98, N179, N299, N334, N423, and N465. 2 coiled-coil regions span residues 86–109 (SREL…LELR) and 160–218 (LEQY…QKLG). Residues 218 to 470 (GCGKLTGVSN…QVLYNVTLFH (253 aa)) enclose the Olfactomedin-like domain. Cysteines 219 and 401 form a disulfide.

As to quaternary structure, peripherally associated with AMPAR complex. AMPAR complex consists of an inner core made of 4 pore-forming GluA/GRIA proteins (GRIA1, GRIA2, GRIA3 and GRIA4) and 4 major auxiliary subunits arranged in a twofold symmetry. One of the two pairs of distinct binding sites is occupied either by CNIH2, CNIH3 or CACNG2, CACNG3. The other harbors CACNG2, CACNG3, CACNG4, CACNG8 or GSG1L. This inner core of AMPAR complex is complemented by outer core constituents binding directly to the GluA/GRIA proteins at sites distinct from the interaction sites of the inner core constituents. Outer core constituents include at least PRRT1, PRRT2, CKAMP44/SHISA9, FRRS1L and NRN1. The proteins of the inner and outer core serve as a platform for other, more peripherally associated AMPAR constituents, including OLFM2. Alone or in combination, these auxiliary subunits control the gating and pharmacology of the AMPAR complex and profoundly impact their biogenesis and protein processing. Interacts with GRIA2. Interacts with OLFM1 and OLFM3. Interacts with SRF; the interaction promotes dissociation of SRF from the transcriptional repressor HEY2. Interacts with RUNX2. As to expression, expressed in the brain (at protein level). Expressed in carotid arteries and the aorta, mainly in aortic SMCs.

It localises to the secreted. The protein resides in the synapse. It is found in the membrane. The protein localises to the nucleus. Its subcellular location is the cytoplasm. In terms of biological role, involved in transforming growth factor beta (TGF-beta)-induced smooth muscle differentiation. TGF-beta induces expression and nuclear translocation of OLFM2 where it binds to SRF, causing its dissociation from the transcriptional repressor HEY2/HERP1 and facilitating binding of SRF to target genes. Plays a role in AMPAR complex organization. Is a regulator of vascular smooth-muscle cell (SMC) phenotypic switching, that acts by promoting RUNX2 and inhibiting MYOCD binding to SRF. SMC phenotypic switching is the process through which vascular SMCs undergo transition between a quiescent contractile phenotype and a proliferative synthetic phenotype in response to pathological stimuli. SMC phenotypic plasticity is essential for vascular development and remodeling. This chain is Noelin-2 (Olfm2), found in Rattus norvegicus (Rat).